The sequence spans 471 residues: Trigger factor (471 aa).

Positions 169-254 constitute a PPIase FKBP-type domain; it reads EDRVTIDYLG…VKEVAKPNEL (86 aa). Residues 435-471 form a disordered region; that stretch reads VSKEELTAEDEDAASEAKPAKKAAAKKKAEEGKSEEA. The span at 461–471 shows a compositional bias: basic and acidic residues; it reads KKAEEGKSEEA.

It belongs to the FKBP-type PPIase family. Tig subfamily.

The protein resides in the cytoplasm. The enzyme catalyses [protein]-peptidylproline (omega=180) = [protein]-peptidylproline (omega=0). Functionally, involved in protein export. Acts as a chaperone by maintaining the newly synthesized protein in an open conformation. Functions as a peptidyl-prolyl cis-trans isomerase. The protein is Trigger factor of Brucella abortus (strain S19).